We begin with the raw amino-acid sequence, 257 residues long: Major prion protein (257 aa).

An N-terminal signal peptide occupies residues 1-24 (MVKSHIGSWLLVLFVATWSDIGFC). The segment at 25–41 (KKRPKPGGGWNTGGSRY) is interaction with ADGRG6. The interval 25–234 (KKRPKPGGGW…ESEAYYQRGA (210 aa)) is interaction with GRB2, ERI3 and SYN1. The disordered stretch occupies residues 27-114 (RPKPGGGWNT…KPSKPKTNMK (88 aa)). 5 repeat units span residues 54 to 62 (PQGGGGWGQ), 63 to 70 (PHGGGWGQ), 71 to 78 (PHGGGWGQ), 79 to 86 (PHGGGWGQ), and 87 to 95 (PHGGGGWGQ). Residues 54–95 (PQGGGGWGQPHGGGWGQPHGGGWGQPHGGGWGQPHGGGGWGQ) are 5 X 8 AA tandem repeats of P-H-G-G-G-W-G-Q. Over residues 55–101 (QGGGGWGQPHGGGWGQPHGGGWGQPHGGGWGQPHGGGGWGQGGGSHG) the composition is skewed to gly residues. Histidine 64, glycine 65, glycine 66, histidine 72, glycine 73, glycine 74, histidine 80, glycine 81, glycine 82, histidine 88, glycine 90, and glycine 91 together coordinate Cu(2+). Cysteines 183 and 218 form a disulfide. Asparagine 185 and asparagine 201 each carry an N-linked (GlcNAc...) asparagine glycan. A lipid anchor (GPI-anchor amidated alanine) is attached at alanine 234. A propeptide spans 235 to 257 (SAILFSPPPVILLISLLILLIVG) (removed in mature form).

The protein belongs to the prion family. Monomer and homodimer. Has a tendency to aggregate into amyloid fibrils containing a cross-beta spine, formed by a steric zipper of superposed beta-strands. Soluble oligomers may represent an intermediate stage on the path to fibril formation. Copper binding may promote oligomerization. Interacts with GRB2, APP, ERI3/PRNPIP and SYN1. Mislocalized cytosolically exposed PrP interacts with MGRN1; this interaction alters MGRN1 subcellular location and causes lysosomal enlargement. Interacts with APP. Interacts with KIAA1191. Interacts with ADGRG6.

It localises to the cell membrane. The protein resides in the golgi apparatus. Its function is as follows. Its primary physiological function is unclear. May play a role in neuronal development and synaptic plasticity. May be required for neuronal myelin sheath maintenance. May promote myelin homeostasis through acting as an agonist for ADGRG6 receptor. May play a role in iron uptake and iron homeostasis. Soluble oligomers are toxic to cultured neuroblastoma cells and induce apoptosis (in vitro). Association with GPC1 (via its heparan sulfate chains) targets PRNP to lipid rafts. Also provides Cu(2+) or Zn(2+) for the ascorbate-mediated GPC1 deaminase degradation of its heparan sulfate side chains. This Neovison vison (American mink) protein is Major prion protein (PRNP).